The chain runs to 427 residues: Serine--tRNA ligase (427 aa).

L-serine is bound at residue Thr232–Glu234. Arg263–Glu265 lines the ATP pocket. Glu286 contributes to the L-serine binding site. Position 350-353 (Glu350–Ser353) interacts with ATP. Position 385 (Ser385) interacts with L-serine.

It belongs to the class-II aminoacyl-tRNA synthetase family. Type-1 seryl-tRNA synthetase subfamily. Homodimer. The tRNA molecule binds across the dimer.

Its subcellular location is the cytoplasm. It catalyses the reaction tRNA(Ser) + L-serine + ATP = L-seryl-tRNA(Ser) + AMP + diphosphate + H(+). It carries out the reaction tRNA(Sec) + L-serine + ATP = L-seryl-tRNA(Sec) + AMP + diphosphate + H(+). It functions in the pathway aminoacyl-tRNA biosynthesis; selenocysteinyl-tRNA(Sec) biosynthesis; L-seryl-tRNA(Sec) from L-serine and tRNA(Sec): step 1/1. Its function is as follows. Catalyzes the attachment of serine to tRNA(Ser). Is also able to aminoacylate tRNA(Sec) with serine, to form the misacylated tRNA L-seryl-tRNA(Sec), which will be further converted into selenocysteinyl-tRNA(Sec). The polypeptide is Serine--tRNA ligase (Lacticaseibacillus paracasei (strain ATCC 334 / BCRC 17002 / CCUG 31169 / CIP 107868 / KCTC 3260 / NRRL B-441) (Lactobacillus paracasei)).